We begin with the raw amino-acid sequence, 1072 residues long: DNA-directed RNA polymerase subunit beta (1072 aa).

It belongs to the RNA polymerase beta chain family. In plastids the minimal PEP RNA polymerase catalytic core is composed of four subunits: alpha, beta, beta', and beta''. When a (nuclear-encoded) sigma factor is associated with the core the holoenzyme is formed, which can initiate transcription.

It localises to the plastid. The protein resides in the chloroplast. It catalyses the reaction RNA(n) + a ribonucleoside 5'-triphosphate = RNA(n+1) + diphosphate. DNA-dependent RNA polymerase catalyzes the transcription of DNA into RNA using the four ribonucleoside triphosphates as substrates. In Olimarabidopsis pumila (Dwarf rocket), this protein is DNA-directed RNA polymerase subunit beta.